We begin with the raw amino-acid sequence, 118 residues long: Holo-[acyl-carrier-protein] synthase (118 aa).

Mg(2+) is bound by residues Asp-8 and Glu-58.

It belongs to the P-Pant transferase superfamily. AcpS family. Mg(2+) is required as a cofactor.

The protein resides in the cytoplasm. The catalysed reaction is apo-[ACP] + CoA = holo-[ACP] + adenosine 3',5'-bisphosphate + H(+). In terms of biological role, transfers the 4'-phosphopantetheine moiety from coenzyme A to a Ser of acyl-carrier-protein. This Listeria monocytogenes serotype 4a (strain HCC23) protein is Holo-[acyl-carrier-protein] synthase.